We begin with the raw amino-acid sequence, 113 residues long: MAELRAHRIAEQMKKELGEILSRKIKDPRVGFVTVTDVEVTGDLQQAKVYISVLGDEKKKQDTLLGLSKAKGFIRSEIGNRIRLRKTPEITFEFDEALEQGNRIETILRDLNK.

It belongs to the RbfA family. In terms of assembly, monomer. Binds 30S ribosomal subunits, but not 50S ribosomal subunits or 70S ribosomes.

Its subcellular location is the cytoplasm. Functionally, one of several proteins that assist in the late maturation steps of the functional core of the 30S ribosomal subunit. Associates with free 30S ribosomal subunits (but not with 30S subunits that are part of 70S ribosomes or polysomes). Required for efficient processing of 16S rRNA. May interact with the 5'-terminal helix region of 16S rRNA. The sequence is that of Ribosome-binding factor A from Oceanobacillus iheyensis (strain DSM 14371 / CIP 107618 / JCM 11309 / KCTC 3954 / HTE831).